The chain runs to 535 residues: MVNIILLIVSALIGLILGYALISIRLKSAKEAAELTLLNAEQEAVDIRGKAEVDAEHIKKTAKRESKANRKELLLKAKEEARKYREEIEQEFKSERQELKQLETRLAERSLTLDRKDENLSSKEKVLDSKEQSLTDKSKHIDERQLQVEKLEEEKKAELEKVAAMTIAEAREVILMETENKLTHEIATRIRDAERDIKDRTVKTAKDLLAQAMQRLAGEYVTEQTITSVHLPDDNMKGRIIGREGRNIRTLESLTGIDVIIDDTPEVVILSGFDPIRREIARMTLESLIADGRIHPARIEELVEKNRLEMDNRIREYGEAAAYEIGAPNLHPDLIKIMGRLQFRTSFGQNVLRHSVEVGKLAGILAGELGENVALARRAGFLHDMGKAIDREVEGSHVEIGMEFARKYKEHPVVVNTIASHHGDVEPDSVIAVLVAAADALSSARPGARNESMENYIKRLRDLEEIATSFDGVQNSFALQAGREIRIMVQPEKISDDQVVILSHKVREKIEHNLDYPGNIKVTVIREMRAVDYAK.

Residues 4-24 (IILLIVSALIGLILGYALISI) form a helical membrane-spanning segment. Positions 118 to 141 (ENLSSKEKVLDSKEQSLTDKSKHI) are disordered. The KH domain maps to 225–285 (TITSVHLPDD…IRREIARMTL (61 aa)). Residues 351–444 (VLRHSVEVGK…VAAADALSSA (94 aa)) form the HD domain.

The protein belongs to the RNase Y family.

The protein resides in the cell membrane. In terms of biological role, endoribonuclease that initiates mRNA decay. This is Ribonuclease Y from Streptococcus pyogenes serotype M2 (strain MGAS10270).